A 318-amino-acid chain; its full sequence is MSFRLQPAPPARPNRCQLFGPGSRPALFEKMAASAADVINLDLEDSVAPDDKAQARANIIEAINGLDWGRKYLSVRINGLDTPFWYRDVVDLLEQAGDRLDQIMIPKVGCAADVYAVDALVTAIERAKGRTKPLSFEVIIESAAGIAHVEEIAASSPRLQAMSLGAADFAASMGMQTTGIGGTQENYYMLHDGQKHWSDPWHWAQAAIVAACRTHGILPVDGPFGDFSDDEGFRAQARRSATLGMVGKWAIHPKQVALANEVFTPSETAVTEAREILAAMDAAKARGEGATVYKGRLVDIASIKQAEVIVRQAEMISA.

Substrate contacts are provided by Phe19, Arg24, Lys30, and Arg76. Mg(2+)-binding residues include Glu141 and Asp168. Substrate contacts are provided by residues 167–168 (AD) and 251–252 (IH).

This sequence belongs to the HpcH/HpaI aldolase family. Homohexamer. Dimer of trimers. The cofactor is Mg(2+). Mn(2+) is required as a cofactor.

It carries out the reaction (S)-malyl-CoA = glyoxylate + acetyl-CoA. The enzyme catalyses (2R,3S)-beta-methylmalyl-CoA = propanoyl-CoA + glyoxylate. Involved in the ethylmalonyl-CoA pathway for acetate assimilation. Catalyzes the reversible condensation of glyoxylate and acetyl-CoA to L-malyl-CoA and the reversible condensation of glyoxylate and propionyl-CoA to yield beta-methylmalyl-CoA. The chain is L-malyl-CoA/beta-methylmalyl-CoA lyase from Cereibacter sphaeroides (strain ATCC 17029 / ATH 2.4.9) (Rhodobacter sphaeroides).